Consider the following 529-residue polypeptide: Interleukin-21 receptor (529 aa).

Positions 1 to 19 are cleaved as a signal peptide; it reads MPRGPVAALLLLILHGAWS. 3 disulfide bridges follow: cysteine 20-cysteine 109, cysteine 25-cysteine 35, and cysteine 65-cysteine 81. Residues 20-237 are Extracellular-facing; it reads CLDLTCYTDY…GEPEAGWDPH (218 aa). Fibronectin type-III domains follow at residues 21–118 and 119–228; these read LDLT…AESI and KPAP…TQAG. 5 N-linked (GlcNAc...) asparagine glycosylation sites follow: asparagine 73, asparagine 97, asparagine 104, asparagine 125, and asparagine 182. A C-linked (Man) tryptophan glycan is attached at tryptophan 214. The WSXWS motif signature appears at 214–218; the sequence is WSEWS. Residues 238 to 258 form a helical membrane-spanning segment; sequence MLLLLAVLIIVLVFMGLKIHL. Residues 259-529 are Cytoplasmic-facing; the sequence is PWRLWKKIWA…PPVDSGAQSS (271 aa). The short motif at 266–274 is the Box 1 motif element; that stretch reads IWAPVPTPE. The disordered stretch occupies residues 458–529; that stretch reads TADPTWRTGS…PPVDSGAQSS (72 aa).

It belongs to the type I cytokine receptor family. Type 4 subfamily. In terms of assembly, heterodimer with the common gamma subunit. Associates with JAK1. In terms of processing, C-mannosylated at Trp-214 in the WSXWS motif, the sugar chain makes extensive hydrogen bonds with Asn-73 sugar, and bridges the two fibronectin domains transforming the V-shaped receptor into an A-frame. In terms of tissue distribution, selectively expressed in lymphoid tissues. Most highly expressed in thymus and spleen.

Its subcellular location is the membrane. Functionally, this is a receptor for interleukin-21. This chain is Interleukin-21 receptor (Il21r), found in Mus musculus (Mouse).